We begin with the raw amino-acid sequence, 101 residues long: NADH-quinone oxidoreductase subunit K (101 aa).

3 consecutive transmembrane segments (helical) span residues 4 to 24 (LSHY…GIFL), 30 to 50 (IILL…FVAF), and 61 to 81 (IFVF…LAIL).

It belongs to the complex I subunit 4L family. As to quaternary structure, NDH-1 is composed of 14 different subunits. Subunits NuoA, H, J, K, L, M, N constitute the membrane sector of the complex.

It is found in the cell inner membrane. The enzyme catalyses a quinone + NADH + 5 H(+)(in) = a quinol + NAD(+) + 4 H(+)(out). In terms of biological role, NDH-1 shuttles electrons from NADH, via FMN and iron-sulfur (Fe-S) centers, to quinones in the respiratory chain. The immediate electron acceptor for the enzyme in this species is believed to be ubiquinone. Couples the redox reaction to proton translocation (for every two electrons transferred, four hydrogen ions are translocated across the cytoplasmic membrane), and thus conserves the redox energy in a proton gradient. The polypeptide is NADH-quinone oxidoreductase subunit K (Nitrosomonas europaea (strain ATCC 19718 / CIP 103999 / KCTC 2705 / NBRC 14298)).